The primary structure comprises 931 residues: Isoleucine--tRNA ligase (931 aa).

The 'HIGH' region motif lies at 57–67 (PFANGNIHMGH). An L-isoleucyl-5'-AMP-binding site is contributed by glutamate 556. The 'KMSKS' region signature appears at 597 to 601 (KMSKS). Lysine 600 lines the ATP pocket. Zn(2+) contacts are provided by cysteine 890, cysteine 893, cysteine 910, and cysteine 913.

The protein belongs to the class-I aminoacyl-tRNA synthetase family. IleS type 1 subfamily. Monomer. Requires Zn(2+) as cofactor.

It localises to the cytoplasm. The enzyme catalyses tRNA(Ile) + L-isoleucine + ATP = L-isoleucyl-tRNA(Ile) + AMP + diphosphate. Catalyzes the attachment of isoleucine to tRNA(Ile). As IleRS can inadvertently accommodate and process structurally similar amino acids such as valine, to avoid such errors it has two additional distinct tRNA(Ile)-dependent editing activities. One activity is designated as 'pretransfer' editing and involves the hydrolysis of activated Val-AMP. The other activity is designated 'posttransfer' editing and involves deacylation of mischarged Val-tRNA(Ile). This Lactobacillus delbrueckii subsp. bulgaricus (strain ATCC BAA-365 / Lb-18) protein is Isoleucine--tRNA ligase.